We begin with the raw amino-acid sequence, 80 residues long: Biotin synthase auxiliary protein (80 aa).

This sequence belongs to the BsaP family. Iron-sulfur cluster is required as a cofactor.

Required for the activity of the biotin synthase BioB. In Mycobacterium leprae (strain TN), this protein is Biotin synthase auxiliary protein.